Here is a 220-residue protein sequence, read N- to C-terminus: Ribosomal RNA small subunit methyltransferase J (220 aa).

S-adenosyl-L-methionine-binding positions include 55–56 (RD), 71–72 (ER), and Asp-123.

The protein belongs to the methyltransferase superfamily. RsmJ family.

The protein resides in the cytoplasm. It carries out the reaction guanosine(1516) in 16S rRNA + S-adenosyl-L-methionine = N(2)-methylguanosine(1516) in 16S rRNA + S-adenosyl-L-homocysteine + H(+). In terms of biological role, specifically methylates the guanosine in position 1516 of 16S rRNA. This chain is Ribosomal RNA small subunit methyltransferase J, found in Rhodopseudomonas palustris (strain BisB5).